Reading from the N-terminus, the 325-residue chain is Olfactory receptor 10AC1 (325 aa).

The Extracellular portion of the chain corresponds to 1–26 (MDSPSNATVPCGFLLQGFSEFPHLRP). N-linked (GlcNAc...) asparagine glycosylation is present at Asn-6. The chain crosses the membrane as a helical span at residues 27 to 47 (VLFLLLLGVHLATLGGNLLIL). Topologically, residues 48-57 (VAVASMPSRQ) are cytoplasmic. Residues 58–78 (PMLLFLCQLSAIELCYTLVVV) form a helical membrane-spanning segment. The Extracellular portion of the chain corresponds to 79–101 (PRSLVDLSTPGHRRGSPISFLSC). The chain crosses the membrane as a helical span at residues 102 to 122 (AFQMQMFVALGGAECFLLAAM). The Cytoplasmic portion of the chain corresponds to 123 to 147 (AYDRYVAICHPLRYAAVVTPGLCAR). Residues 148–168 (LALACCLRGLAVSVGLTVAIF) form a helical membrane-spanning segment. Topologically, residues 169 to 171 (HLP) are extracellular. Residues 172 to 192 (FCGSRLLLHFFCDITALLHLA) traverse the membrane as a helical segment. Residues 193–200 (CTRSYADE) lie on the Cytoplasmic side of the membrane. The chain crosses the membrane as a helical span at residues 201–221 (LPLLGACLVLLLLPSVLILAS). The Extracellular segment spans residues 222–243 (YGAIAAALRRLRCPKGRGKAAS). A helical membrane pass occupies residues 244 to 264 (TCALHLAVTFLHYGCATFMYV). Over 265–325 (RPRASYSPRL…QAPGGDLREL (61 aa)) the chain is Cytoplasmic.

Belongs to the G-protein coupled receptor 1 family.

The protein localises to the cell membrane. In terms of biological role, odorant receptor. The chain is Olfactory receptor 10AC1 (OR10AC1) from Homo sapiens (Human).